We begin with the raw amino-acid sequence, 192 residues long: Early nodulin-like protein 7 (192 aa).

An N-terminal signal peptide occupies residues 1–27 (MMMMMMRSTCNLTLMLCICALVVASMA). A Phytocyanin domain is found at 32–134 (RDFKVGDEFG…GQRLIVEVMH (103 aa)). N-linked (GlcNAc...) asparagine glycans are attached at residues N48, N89, and N101. C88 and C122 are disulfide-bonded. Residue S166 is the site of GPI-anchor amidated serine attachment. A propeptide spans 167-192 (AASSLPTACLLIPLFLTIASFRFISY) (removed in mature form).

It belongs to the early nodulin-like (ENODL) family. Mostly expressed in flowers, and, to a lower extent, in seeds, but barely in seedlings, stems, leaves and roots.

Its subcellular location is the cell membrane. Its function is as follows. May act as a carbohydrate transporter. In Arabidopsis thaliana (Mouse-ear cress), this protein is Early nodulin-like protein 7.